We begin with the raw amino-acid sequence, 282 residues long: 2-dehydro-3-deoxyphosphooctonate aldolase (282 aa).

It belongs to the KdsA family.

The protein localises to the cytoplasm. The enzyme catalyses D-arabinose 5-phosphate + phosphoenolpyruvate + H2O = 3-deoxy-alpha-D-manno-2-octulosonate-8-phosphate + phosphate. Its pathway is carbohydrate biosynthesis; 3-deoxy-D-manno-octulosonate biosynthesis; 3-deoxy-D-manno-octulosonate from D-ribulose 5-phosphate: step 2/3. The protein operates within bacterial outer membrane biogenesis; lipopolysaccharide biosynthesis. The sequence is that of 2-dehydro-3-deoxyphosphooctonate aldolase from Bradyrhizobium diazoefficiens (strain JCM 10833 / BCRC 13528 / IAM 13628 / NBRC 14792 / USDA 110).